The following is a 680-amino-acid chain: MAAAVAGPLAAGGEEAAASVSLPGSPGLPGSRSAERALEEAVATGTLNLSNRRLKHFPRGAARSYDLSDITQADLSRNRFPEVPEAACQLVSLEGLSLYHNCLKCLNPALGNLTALTYLNLSRNQLSSLPPYICQLPLRVLIISNNKLGALPPDISTLGSLRQLDVSSNELQSLPVELCSLRSLRDLNVRRNQLSTLPDELGDLPLVRLDFSCNRISRIPVSFCRLRHLQVVLLDSNPLQSPPAQICLKGKLHIFKYLTMEAGRRGAALGDLVPSRPPSFSPCPAEDLFPGRRYDGGLDSGFHSVDSGSKRWSGNESTDDFSELSFRISELARDPRGPRQPREDGAGDGDLEQIDFIDSHVPGEDEDRSAAEEQLPSELSLVAGDVEKPSSSRREEPAGEERRRPDTLQLWQERERKQQQQSGGWGSPRKDSVLKRGIRAAGAGASAPSTQATCNGPPKSSTTQLGVSGGQGAPTPPPTSQDPLPVSGPVTAPVPRPLGSIQRPNSFLFRSSSQSGSSPSSPESVLRPRPFPQEKELISQLRQVLESRLQQPLPEDLAEALANGVLLCQLANQLRPRSVPFIHVPSPAVPKLSALKSRKNVESFLEACRKMGVPEADLCSPSDLLRGTAQGLQTVLEAVILVGGKAPLPVQPSSGLGGFLLFYVVFMLLLYVVYTRLLGS.

The segment covering 1–22 (MAAAVAGPLAAGGEEAAASVSL) has biased composition (low complexity). Residues 1-35 (MAAAVAGPLAAGGEEAAASVSLPGSPGLPGSRSAE) form a disordered region. LRR repeat units follow at residues 41 to 64 (AVAT…AARS), 67 to 90 (LSDI…ACQL), 92 to 113 (SLEG…LGNL), 114 to 136 (TALT…ICQL), 138 to 158 (LRVL…ISTL), 159 to 181 (GSLR…LCSL), 182 to 204 (RSLR…LGDL), 206 to 226 (LVRL…FCRL), and 227 to 250 (RHLQ…CLKG). A phosphoserine mark is found at S279, S281, S304, S307, S309, and S313. Residues 329–528 (SELARDPRGP…PSSPESVLRP (200 aa)) form a disordered region. Basic and acidic residues predominate over residues 330-345 (ELARDPRGPRQPREDG). Acidic residues predominate over residues 346–355 (AGDGDLEQID). Composition is skewed to basic and acidic residues over residues 357-371 (IDSH…RSAA) and 385-418 (DVEK…ERKQ). Residue S432 is modified to Phosphoserine. Composition is skewed to low complexity over residues 440-453 (AAGA…TQAT) and 510-528 (RSSS…VLRP). S511, S513, S517, S521, and S586 each carry phosphoserine. One can recognise a Calponin-homology (CH) domain in the interval 531–644 (FPQEKELISQ…VLEAVILVGG (114 aa)). Residues 655–675 (GLGGFLLFYVVFMLLLYVVYT) traverse the membrane as a helical segment.

In terms of tissue distribution, widely expressed across tissues, with the most abundant expression in spleen, testes, thymus, intestine, and blood. Expressed in macrophages.

The protein resides in the cell membrane. Functionally, accessory protein that regulates signaling by multiple TLRs, acting as a broad-spanning regulator of the innate immune response. In macrophages, binds LPS and promotes proper docking of LPS in lipid raft membrane. May be required for lipid raft maintenance. This is Leucine-rich repeat and calponin homology domain-containing protein 4 (Lrch4) from Mus musculus (Mouse).